Reading from the N-terminus, the 263-residue chain is Single-stranded DNA-binding protein WHY1, chloroplastic (263 aa).

Residues 1–47 constitute a chloroplast transit peptide; the sequence is MSQLLSTPLMAVNSNPRFLSSSSVLVTGGFAVKRHGFALKPTTKTVK. A required for ssDNA binding region spans residues 89–94; the sequence is KGKAAL. Residues 167 to 180 carry the Nuclear localization signal motif; that stretch reads KGKSDEGKVRKVLK.

The protein belongs to the Whirly family. As to quaternary structure, homotetramer.

The protein localises to the plastid. It is found in the chloroplast. It localises to the nucleus. Functionally, single-stranded DNA-binding protein that functions in both chloroplasts and nucleus. In chloroplasts, maintains plastid genome stability by preventing break-induced and short homology-dependent illegitimate recombinations. In nucleus, modulates telomere length homeostasis by inhibiting the action of the telomerase at the extreme termini of chromosomes. Is recruited to a distal element upstream of the kinesin KP1 to mediate the transcriptional repression of KP1. Is required for full salicylic acid-dependent plant disease resistance responses. Can bind double-stranded DNA in vivo. The protein is Single-stranded DNA-binding protein WHY1, chloroplastic (WHY1) of Arabidopsis thaliana (Mouse-ear cress).